We begin with the raw amino-acid sequence, 459 residues long: Elongation factor 1-alpha (459 aa).

A N,N,N-trimethylglycine modification is found at Gly2. At Lys3 the chain carries N6,N6-dimethyllysine; alternate. Position 3 is an N6-methyllysine; alternate (Lys3). The 236-residue stretch at 5-240 (KTHVNVVVIG…DAVDPPTRPS (236 aa)) folds into the tr-type G domain. A G1 region spans residues 14 to 21 (GHVDSGKS). 14–21 (GHVDSGKS) serves as a coordination point for GTP. An N6-methyllysine modification is found at Lys30. A G2 region spans residues 70 to 74 (VITID). The residue at position 79 (Lys79) is an N6,N6,N6-trimethyllysine. The interval 91 to 94 (DAPG) is G3. GTP contacts are provided by residues 91-95 (DAPGH) and 153-156 (NKMD). The segment at 153–156 (NKMD) is G4. Residues 192–194 (SGW) are G5. The residue at position 316 (Lys316) is an N6,N6-dimethyllysine; alternate. Lys316 carries the N6-methyllysine; alternate modification. The residue at position 390 (Lys390) is an N6-methyllysine.

This sequence belongs to the TRAFAC class translation factor GTPase superfamily. Classic translation factor GTPase family. EF-Tu/EF-1A subfamily.

The protein resides in the cytoplasm. Its function is as follows. This protein promotes the GTP-dependent binding of aminoacyl-tRNA to the A-site of ribosomes during protein biosynthesis. In Blastobotrys adeninivorans (Yeast), this protein is Elongation factor 1-alpha (TEF).